The following is a 39-amino-acid chain: Omega-theraphotoxin-Asp1g (39 aa).

3 disulfides stabilise this stretch: Cys-4/Cys-25, Cys-8/Cys-31, and Cys-17/Cys-36.

The protein belongs to the neurotoxin 12 (Hwtx-2) family. 06 (TXP1) subfamily. As to expression, expressed by the venom gland.

It localises to the secreted. Inhibits voltage-gated calcium channels (Cav) in rat cerebellar granule cells. Has insecticidal activity. This Aphonopelma sp. (American tarantula) protein is Omega-theraphotoxin-Asp1g.